The primary structure comprises 220 residues: Nucleoside diphosphate kinase, mitochondrial (220 aa).

Residues 1-57 constitute a mitochondrion transit peptide; the sequence is MFSRFARAFPKILASGASQRTFATVQKAFANPTSKKLIVGSSLLIGSAFATTSFVAC. ATP contacts are provided by Lys-80, Phe-128, Arg-156, Thr-162, Arg-173, and Asn-183. His-186 (pros-phosphohistidine intermediate) is an active-site residue.

It belongs to the NDK family. It depends on Mg(2+) as a cofactor.

It localises to the mitochondrion intermembrane space. The enzyme catalyses a 2'-deoxyribonucleoside 5'-diphosphate + ATP = a 2'-deoxyribonucleoside 5'-triphosphate + ADP. It catalyses the reaction a ribonucleoside 5'-diphosphate + ATP = a ribonucleoside 5'-triphosphate + ADP. Major role in the synthesis of nucleoside triphosphates other than ATP. The ATP gamma phosphate is transferred to the NDP beta phosphate via a ping-pong mechanism, using a phosphorylated active-site intermediate. This chain is Nucleoside diphosphate kinase, mitochondrial (ndkM), found in Dictyostelium discoideum (Social amoeba).